A 363-amino-acid polypeptide reads, in one-letter code: Chorismate synthase (363 aa).

Residue Arg48 coordinates NADP(+). Residues 125–127, 238–239, Gly278, 293–297, and Arg319 contribute to the FMN site; these read RSS, NA, and KPTAS.

Belongs to the chorismate synthase family. Homotetramer. The cofactor is FMNH2.

The enzyme catalyses 5-O-(1-carboxyvinyl)-3-phosphoshikimate = chorismate + phosphate. The protein operates within metabolic intermediate biosynthesis; chorismate biosynthesis; chorismate from D-erythrose 4-phosphate and phosphoenolpyruvate: step 7/7. In terms of biological role, catalyzes the anti-1,4-elimination of the C-3 phosphate and the C-6 proR hydrogen from 5-enolpyruvylshikimate-3-phosphate (EPSP) to yield chorismate, which is the branch point compound that serves as the starting substrate for the three terminal pathways of aromatic amino acid biosynthesis. This reaction introduces a second double bond into the aromatic ring system. The chain is Chorismate synthase from Acinetobacter baumannii (strain ACICU).